Here is a 481-residue protein sequence, read N- to C-terminus: MQLFWHRRDLRTTDNRGLAAAAPGVTAVDGGHDQGPVAAVFCFDDEVLAHAAPPRVAFMLDALAALRERYRDLGSDLIVRHGDPAAVLPAVANDLDATRVVWNHDYSGLATDRDAGVRDALDAAGVAHAQFHDAVHHRPGEIRTNAGDPYSVYTYFWRKWQDREKNPPAPEPEPADLAADTALADTSPLPSVQELGFAEPEAAVPDAGTAAARSLLDAFRESGDIYRYEDRRDYPHEEPTSRLSPHLKFGTIGIRTVYEAARAAKSDADTDDERENVAAFIGQLAWREFYAQVLYFNQNVVSENFKAYEHPIEWRDDPAALQAWKDGETGYPIVDAGMRQLRAEAYMHNRVRMIVAAFLTKDLLVDWRAGYDWFREKLADHDTANDNGGWQWAASTGTDAQPYFRVFNPMTQGERYDPDADYITEFVPELRDVPADAIHSWHELSLSERRRHAPEYPDPIVDHSQRREDAIAMFERARGDE.

Residues 1–136 (MQLFWHRRDL…AHAQFHDAVH (136 aa)) enclose the Photolyase/cryptochrome alpha/beta domain. Tyr228 provides a ligand contact to FAD. Residue Arg232 coordinates DNA. An FAD-binding site is contributed by 240–244 (TSRLS). Interaction with DNA regions lie at residues 283-290 (QLAWREFY) and 349-350 (NR). 380–382 (DHD) contributes to the FAD binding site. Residue Gln412 coordinates DNA.

The protein belongs to the DNA photolyase class-1 family. Monomer. FAD is required as a cofactor. It depends on coenzyme F420-(gamma-Glu)n as a cofactor.

The catalysed reaction is cyclobutadipyrimidine (in DNA) = 2 pyrimidine residues (in DNA).. Its function is as follows. Involved in repair of UV radiation-induced DNA damage. Catalyzes the light-dependent monomerization (300-600 nm) of cyclobutyl pyrimidine dimers (in cis-syn configuration), which are formed between adjacent bases on the same DNA strand upon exposure to ultraviolet radiation. The chain is Deoxyribodipyrimidine photo-lyase (phr) from Halobacterium salinarum (strain ATCC 700922 / JCM 11081 / NRC-1) (Halobacterium halobium).